Consider the following 63-residue polypeptide: Small ribosomal subunit protein eS17 (63 aa).

The protein belongs to the eukaryotic ribosomal protein eS17 family.

The protein is Small ribosomal subunit protein eS17 of Methanococcus vannielii (strain ATCC 35089 / DSM 1224 / JCM 13029 / OCM 148 / SB).